A 309-amino-acid polypeptide reads, in one-letter code: Polyprenal reductase (309 aa).

Residues 1–3 (MFH) lie on the Cytoplasmic side of the membrane. The helical transmembrane segment at 4 to 24 (ILSIVNIIWLLLALCFGAAFC) threads the bilayer. At 25–67 (LNKFSVKLPNRVEHVFQDFIRYGKTKENIKRASWQLVFDLSKR) the chain is on the lumenal side. The chain crosses the membrane as a helical span at residues 68 to 88 (YFYHFYVVSVMWNGLLLLFSI). Residues 89 to 114 (RSVVMSEAFPDWIIDVLGSLTGRSRG) lie on the Cytoplasmic side of the membrane. Residues 115 to 135 (AWNEIHLSTLLLQVLLWVHTL) form a helical membrane-spanning segment. Topologically, residues 136–150 (RRLLECLFVSVFSDG) are lumenal. The chain crosses the membrane as a helical span at residues 151-171 (VINVVQYAFGLSYYIILGLTV). Over 172-185 (LCTNDSLPQSESVS) the chain is Cytoplasmic. Residues 186–206 (FFNQLTWYHVVGTLLFFWASF) form a helical membrane-spanning segment. Residues 207 to 255 (LQHQSLSLLAKMRTDSSGKVETLAHKMPCGGWFELVSCPHYLAELLIYA) are Lumenal-facing. A helical membrane pass occupies residues 256-276 (AMCVCCGCASLTWWMVVLYVL). At 277-309 (CNQALAAQLCHEYYRSKFKTYPHHRKAFIPFVL) the chain is on the cytoplasmic side.

It belongs to the steroid 5-alpha reductase family. Polyprenal reductase subfamily.

It localises to the endoplasmic reticulum membrane. It catalyses the reaction a di-trans,poly-cis-dolichal + NADP(+) = a di-trans,poly-cis-polyprenal + NADPH + H(+). The enzyme catalyses a 3-oxo-5alpha-steroid + NADP(+) = a 3-oxo-Delta(4)-steroid + NADPH + H(+). It carries out the reaction androst-4-ene-3,17-dione + NADPH + H(+) = 5alpha-androstan-3,17-dione + NADP(+). The catalysed reaction is 17beta-hydroxy-5alpha-androstan-3-one + NADP(+) = testosterone + NADPH + H(+). It functions in the pathway protein modification; protein glycosylation. Its function is as follows. Plays a key role in early steps of protein N-linked glycosylation by being involved in the conversion of polyprenol into dolichol. Acts as a polyprenal reductase that mediates the reduction of polyprenal into dolichal in a NADP-dependent mechanism. Dolichols are required for the synthesis of dolichol-linked monosaccharides and the oligosaccharide precursor used for N-glycosylation. Also able to convert testosterone (T) into 5-alpha-dihydrotestosterone (DHT). This chain is Polyprenal reductase (srd5a3), found in Danio rerio (Zebrafish).